Reading from the N-terminus, the 152-residue chain is Cuticle protein 64 (152 aa).

Repeat copies occupy residues 27-30 (AAPA), 33-37 (AAPAV), 39-42 (AAPA), 86-89 (AAPV), 92-95 (AAPA), 98-101 (AAPA), and 127-130 (AAPA).

Component of the cuticle of migratory locust which contains more than 100 different structural proteins. The polypeptide is Cuticle protein 64 (Locusta migratoria (Migratory locust)).